We begin with the raw amino-acid sequence, 293 residues long: Large ribosomal RNA subunit accumulation protein YCED homolog 1, chloroplastic (293 aa).

The transit peptide at 1-42 (MYYPQPTVSLAAAVALLRPSLRRHSQRASSLLRSSTPPPWVS) directs the protein to the chloroplast.

The protein belongs to the DUF177 domain family. Highly expressed in shoots and leaves. Detected in roots, embryos and endosperm.

It localises to the plastid. It is found in the chloroplast. Plays a role in synthesis, processing and/or stability of 23S rRNA. Required for embryogenesis. May be involved in RPL23 transcript levels regulation in non-photosynthetic plastids. The polypeptide is Large ribosomal RNA subunit accumulation protein YCED homolog 1, chloroplastic (Zea mays (Maize)).